The following is a 230-amino-acid chain: Potassium/proton antiporter CemA (230 aa).

4 helical membrane-spanning segments follow: residues 7 to 27, 107 to 127, 145 to 165, and 181 to 201; these read LPSL…SSSF, ILHF…FFLG, LNDS…VGFH, and FGWA…PVIL.

It belongs to the CemA family.

The protein localises to the plastid. It is found in the chloroplast inner membrane. The catalysed reaction is K(+)(in) + H(+)(out) = K(+)(out) + H(+)(in). Its function is as follows. Contributes to K(+)/H(+) antiport activity by supporting proton efflux to control proton extrusion and homeostasis in chloroplasts in a light-dependent manner to modulate photosynthesis. Prevents excessive induction of non-photochemical quenching (NPQ) under continuous-light conditions. Indirectly promotes efficient inorganic carbon uptake into chloroplasts. This is Potassium/proton antiporter CemA from Triticum aestivum (Wheat).